The primary structure comprises 407 residues: Phosphopentomutase (407 aa).

Mn(2+) contacts are provided by aspartate 10, aspartate 306, histidine 311, aspartate 347, histidine 348, and histidine 359.

It belongs to the phosphopentomutase family. It depends on Mn(2+) as a cofactor.

It localises to the cytoplasm. It carries out the reaction 2-deoxy-alpha-D-ribose 1-phosphate = 2-deoxy-D-ribose 5-phosphate. It catalyses the reaction alpha-D-ribose 1-phosphate = D-ribose 5-phosphate. Its pathway is carbohydrate degradation; 2-deoxy-D-ribose 1-phosphate degradation; D-glyceraldehyde 3-phosphate and acetaldehyde from 2-deoxy-alpha-D-ribose 1-phosphate: step 1/2. Isomerase that catalyzes the conversion of deoxy-ribose 1-phosphate (dRib-1-P) and ribose 1-phosphate (Rib-1-P) to deoxy-ribose 5-phosphate (dRib-5-P) and ribose 5-phosphate (Rib-5-P), respectively. The chain is Phosphopentomutase from Sodalis glossinidius (strain morsitans).